The sequence spans 211 residues: MAFKDAINKMVSYFDTDEVNEVEEEVTAAKMEEPVVQEPKQRPIPSQQTSRQSQNPAMNRPTVARSQQTESDSLPTYPNRQESIDRRSSGRESVTASTARRETYQAQTTVQEGKTTIALKYPKKYEDAQEIVDLLIGNECVLIDFQFMLDAQARRCLDFIDGASKVLYGTLQKVGSSMYLLTPSNVSVNIEDMNIPNHNQDFGYDFDMKRR.

The span at 15–26 (DTDEVNEVEEEV) shows a compositional bias: acidic residues. Residues 15–111 (DTDEVNEVEE…ETYQAQTTVQ (97 aa)) form a disordered region. 3 stretches are compositionally biased toward polar residues: residues 44–57 (IPSQ…QNPA), 64–81 (ARSQ…PNRQ), and 91–111 (RESV…TTVQ).

This sequence belongs to the SepF family. As to quaternary structure, homodimer. Interacts with FtsZ.

The protein localises to the cytoplasm. Cell division protein that is part of the divisome complex and is recruited early to the Z-ring. Probably stimulates Z-ring formation, perhaps through the cross-linking of FtsZ protofilaments. Its function overlaps with FtsA. This is Cell division protein SepF from Streptococcus uberis (strain ATCC BAA-854 / 0140J).